The chain runs to 249 residues: Acetylglutamate kinase (249 aa).

Substrate is bound by residues glycine 36–glycine 37, arginine 58, and asparagine 147.

This sequence belongs to the acetylglutamate kinase family. ArgB subfamily.

Its subcellular location is the cytoplasm. It catalyses the reaction N-acetyl-L-glutamate + ATP = N-acetyl-L-glutamyl 5-phosphate + ADP. The protein operates within amino-acid biosynthesis; L-arginine biosynthesis; N(2)-acetyl-L-ornithine from L-glutamate: step 2/4. In terms of biological role, catalyzes the ATP-dependent phosphorylation of N-acetyl-L-glutamate. In Thermus thermophilus (strain ATCC 27634 / DSM 579 / HB8), this protein is Acetylglutamate kinase.